Here is a 227-residue protein sequence, read N- to C-terminus: Cytochrome c oxidase subunit 2 (227 aa).

The Mitochondrial intermembrane segment spans residues 1–14; the sequence is MAHAAQMGLQDATS. A helical transmembrane segment spans residues 15–45; the sequence is PIMEELISFHDHALMIIFLISFLVLYALFLT. The Mitochondrial matrix segment spans residues 46–59; the sequence is LTTKLTNTNITDAQ. A helical membrane pass occupies residues 60–87; it reads EMETVWTILPAIILVLIALPSLRILYLT. Over 88 to 227 the chain is Mitochondrial intermembrane; it reads DEINDPSFTI…IFEMGPVFTL (140 aa). Cu cation is bound by residues H161, C196, E198, C200, H204, and M207. Residue E198 coordinates Mg(2+).

It belongs to the cytochrome c oxidase subunit 2 family. In terms of assembly, component of the cytochrome c oxidase (complex IV, CIV), a multisubunit enzyme composed of 14 subunits. The complex is composed of a catalytic core of 3 subunits MT-CO1, MT-CO2 and MT-CO3, encoded in the mitochondrial DNA, and 11 supernumerary subunits COX4I, COX5A, COX5B, COX6A, COX6B, COX6C, COX7A, COX7B, COX7C, COX8 and NDUFA4, which are encoded in the nuclear genome. The complex exists as a monomer or a dimer and forms supercomplexes (SCs) in the inner mitochondrial membrane with NADH-ubiquinone oxidoreductase (complex I, CI) and ubiquinol-cytochrome c oxidoreductase (cytochrome b-c1 complex, complex III, CIII), resulting in different assemblies (supercomplex SCI(1)III(2)IV(1) and megacomplex MCI(2)III(2)IV(2)). Found in a complex with TMEM177, COA6, COX18, COX20, SCO1 and SCO2. Interacts with TMEM177 in a COX20-dependent manner. Interacts with COX20. Interacts with COX16. Requires Cu cation as cofactor.

The protein localises to the mitochondrion inner membrane. It carries out the reaction 4 Fe(II)-[cytochrome c] + O2 + 8 H(+)(in) = 4 Fe(III)-[cytochrome c] + 2 H2O + 4 H(+)(out). Functionally, component of the cytochrome c oxidase, the last enzyme in the mitochondrial electron transport chain which drives oxidative phosphorylation. The respiratory chain contains 3 multisubunit complexes succinate dehydrogenase (complex II, CII), ubiquinol-cytochrome c oxidoreductase (cytochrome b-c1 complex, complex III, CIII) and cytochrome c oxidase (complex IV, CIV), that cooperate to transfer electrons derived from NADH and succinate to molecular oxygen, creating an electrochemical gradient over the inner membrane that drives transmembrane transport and the ATP synthase. Cytochrome c oxidase is the component of the respiratory chain that catalyzes the reduction of oxygen to water. Electrons originating from reduced cytochrome c in the intermembrane space (IMS) are transferred via the dinuclear copper A center (CU(A)) of subunit 2 and heme A of subunit 1 to the active site in subunit 1, a binuclear center (BNC) formed by heme A3 and copper B (CU(B)). The BNC reduces molecular oxygen to 2 water molecules using 4 electrons from cytochrome c in the IMS and 4 protons from the mitochondrial matrix. In Symphalangus syndactylus (Siamang), this protein is Cytochrome c oxidase subunit 2 (MT-CO2).